The chain runs to 98 residues: Large ribosomal subunit protein eL21 (98 aa).

Positions 1–24 are enriched in basic residues; the sequence is MVKKAHSFRRKTRGKLSKHPRRRG. The tract at residues 1 to 27 is disordered; it reads MVKKAHSFRRKTRGKLSKHPRRRGLPP.

The protein belongs to the eukaryotic ribosomal protein eL21 family.

In Thermococcus gammatolerans (strain DSM 15229 / JCM 11827 / EJ3), this protein is Large ribosomal subunit protein eL21.